The following is a 413-amino-acid chain: Histidine--tRNA ligase (413 aa).

Belongs to the class-II aminoacyl-tRNA synthetase family. Homodimer.

Its subcellular location is the cytoplasm. It carries out the reaction tRNA(His) + L-histidine + ATP = L-histidyl-tRNA(His) + AMP + diphosphate + H(+). This Ehrlichia chaffeensis (strain ATCC CRL-10679 / Arkansas) protein is Histidine--tRNA ligase.